We begin with the raw amino-acid sequence, 242 residues long: Protein HTATIP2 (242 aa).

Residue A2 is modified to N-acetylalanine. A required for interaction with elongation factor EEF1A1 region spans residues 2-25 (AETEALSKLREDFRMQNKSVFILG). NADPH-binding residues include S27, G28, E29, T30, R52, R53, L92, G93, Y143, K147, L170, and R178. The Proton acceptor role is filled by Y143. K147 is a catalytic residue.

In terms of assembly, monomer. Forms homodimers during oxidative stress. Interacts (via N-terminus) with elongation factor EEF1A1 (via middle-region); the interaction is direct and competes with EEF1A1 binding to guanyl-nucleotide exchange factor EEF1B2, thereby inhibiting GDP for GTP exchange and reactivation of EEF1A1. Interacts with nuclear transport receptors XPO4, IPO5/RANBP5, IPO7, IPO9 and KPNB1 as well as GCN1L1/GCN1 and LRPPRC probably through their HEAT repeats. Binds NCOA5/CIA.

The protein localises to the cytoplasm. Its function is as follows. Represses translation by preventing reactivation of elongation factor eEF1A. May also inhibit nuclear import by competing with nuclear import substrates for binding to a subset of nuclear transport receptors. Has additionally been proposed to act as a redox sensor involved in cellular oxidative stress surveillance. The polypeptide is Protein HTATIP2 (HTATIP2) (Pongo pygmaeus (Bornean orangutan)).